The following is a 129-amino-acid chain: uncharacterized protein (129 aa).

The chain crosses the membrane as a helical span at residues 5–25 (IIGLTLAFFVLFLTAVAILFT).

The protein localises to the membrane. This is an uncharacterized protein from Mycoplasma pneumoniae (strain ATCC 29342 / M129 / Subtype 1) (Mycoplasmoides pneumoniae).